Consider the following 352-residue polypeptide: Large ribosomal subunit protein uL5m (352 aa).

The tract at residues 28 to 109 (STQTGAGAAA…HPIQSPPSSD (82 aa)) is disordered. Over residues 63–80 (EEDKKEFRPWKRAADRKA) the composition is skewed to basic and acidic residues.

Belongs to the universal ribosomal protein uL5 family. Component of the mitochondrial large ribosomal subunit (mt-LSU). Mature N.crassa 74S mitochondrial ribosomes consist of a small (37S) and a large (54S) subunit. The 37S small subunit contains a 16S ribosomal RNA (16S mt-rRNA) and 32 different proteins. The 54S large subunit contains a 23S rRNA (23S mt-rRNA) and 42 different proteins. Unlike bacterial L5, uL5m does not bind zinc.

The protein resides in the mitochondrion. In terms of biological role, component of the mitochondrial ribosome (mitoribosome), a dedicated translation machinery responsible for the synthesis of mitochondrial genome-encoded proteins, including at least some of the essential transmembrane subunits of the mitochondrial respiratory chain. The mitoribosomes are attached to the mitochondrial inner membrane and translation products are cotranslationally integrated into the membrane. The chain is Large ribosomal subunit protein uL5m (mrpl7) from Neurospora crassa (strain ATCC 24698 / 74-OR23-1A / CBS 708.71 / DSM 1257 / FGSC 987).